The primary structure comprises 94 residues: Small ribosomal subunit protein uS19 (94 aa).

Belongs to the universal ribosomal protein uS19 family.

Its function is as follows. Protein S19 forms a complex with S13 that binds strongly to the 16S ribosomal RNA. The sequence is that of Small ribosomal subunit protein uS19 from Wolbachia pipientis subsp. Culex pipiens (strain wPip).